Consider the following 63-residue polypeptide: Large ribosomal subunit protein bL28 (63 aa).

The interval 1-20 is disordered; the sequence is MSKRCAITGKGPMVGNNVSH.

Belongs to the bacterial ribosomal protein bL28 family.

The protein is Large ribosomal subunit protein bL28 of Campylobacter fetus subsp. fetus (strain 82-40).